The chain runs to 611 residues: Dihydroxy-acid dehydratase (611 aa).

Aspartate 81 contacts Mg(2+). Cysteine 122 lines the [2Fe-2S] cluster pocket. Mg(2+) contacts are provided by aspartate 123 and lysine 124. Lysine 124 carries the N6-carboxylysine modification. Cysteine 195 contacts [2Fe-2S] cluster. Glutamate 491 is a binding site for Mg(2+). The Proton acceptor role is filled by serine 517.

The protein belongs to the IlvD/Edd family. As to quaternary structure, homodimer. [2Fe-2S] cluster serves as cofactor. Mg(2+) is required as a cofactor.

It carries out the reaction (2R)-2,3-dihydroxy-3-methylbutanoate = 3-methyl-2-oxobutanoate + H2O. The catalysed reaction is (2R,3R)-2,3-dihydroxy-3-methylpentanoate = (S)-3-methyl-2-oxopentanoate + H2O. It functions in the pathway amino-acid biosynthesis; L-isoleucine biosynthesis; L-isoleucine from 2-oxobutanoate: step 3/4. Its pathway is amino-acid biosynthesis; L-valine biosynthesis; L-valine from pyruvate: step 3/4. Functions in the biosynthesis of branched-chain amino acids. Catalyzes the dehydration of (2R,3R)-2,3-dihydroxy-3-methylpentanoate (2,3-dihydroxy-3-methylvalerate) into 2-oxo-3-methylpentanoate (2-oxo-3-methylvalerate) and of (2R)-2,3-dihydroxy-3-methylbutanoate (2,3-dihydroxyisovalerate) into 2-oxo-3-methylbutanoate (2-oxoisovalerate), the penultimate precursor to L-isoleucine and L-valine, respectively. The polypeptide is Dihydroxy-acid dehydratase (Brucella abortus (strain S19)).